The primary structure comprises 224 residues: Testis-expressed protein 30 (224 aa).

This chain is Testis-expressed protein 30 (TEX30), found in Bos taurus (Bovine).